Consider the following 302-residue polypeptide: N-acetylmuramic acid 6-phosphate etherase (302 aa).

One can recognise an SIS domain in the interval 58 to 221 (IGESFLNGGR…STGAMVKTGK (164 aa)). E86 acts as the Proton donor in catalysis. The active site involves E117.

Belongs to the GCKR-like family. MurNAc-6-P etherase subfamily. As to quaternary structure, homodimer.

It catalyses the reaction N-acetyl-D-muramate 6-phosphate + H2O = N-acetyl-D-glucosamine 6-phosphate + (R)-lactate. It functions in the pathway amino-sugar metabolism; N-acetylmuramate degradation. Functionally, specifically catalyzes the cleavage of the D-lactyl ether substituent of MurNAc 6-phosphate, producing GlcNAc 6-phosphate and D-lactate. The sequence is that of N-acetylmuramic acid 6-phosphate etherase from Clostridium botulinum (strain Okra / Type B1).